Reading from the N-terminus, the 388-residue chain is Succinate--CoA ligase [ADP-forming] subunit beta (388 aa).

The region spanning 9–244 (KEILRKFGVA…LDEEDPAEIE (236 aa)) is the ATP-grasp domain. ATP contacts are provided by residues lysine 46, 53–55 (GRG), glutamate 99, alanine 102, and glutamate 107. Mg(2+) is bound by residues asparagine 199 and aspartate 213. Substrate-binding positions include asparagine 264 and 321-323 (GIM).

This sequence belongs to the succinate/malate CoA ligase beta subunit family. Heterotetramer of two alpha and two beta subunits. It depends on Mg(2+) as a cofactor.

The enzyme catalyses succinate + ATP + CoA = succinyl-CoA + ADP + phosphate. The catalysed reaction is GTP + succinate + CoA = succinyl-CoA + GDP + phosphate. The protein operates within carbohydrate metabolism; tricarboxylic acid cycle; succinate from succinyl-CoA (ligase route): step 1/1. Its function is as follows. Succinyl-CoA synthetase functions in the citric acid cycle (TCA), coupling the hydrolysis of succinyl-CoA to the synthesis of either ATP or GTP and thus represents the only step of substrate-level phosphorylation in the TCA. The beta subunit provides nucleotide specificity of the enzyme and binds the substrate succinate, while the binding sites for coenzyme A and phosphate are found in the alpha subunit. This is Succinate--CoA ligase [ADP-forming] subunit beta from Burkholderia cenocepacia (strain HI2424).